The chain runs to 54 residues: Light-harvesting protein B-800/850 alpha chain (54 aa).

At 1-14 (MTNGKIWLVVKPTV) the chain is on the cytoplasmic side. A helical membrane pass occupies residues 15 to 35 (GVPLFLSAAVIASVVIHAAVL). His-31 is an a bacteriochlorophyll binding site. Residues 36–54 (TTTTWLPAYYQGSAAVAAE) lie on the Periplasmic side of the membrane.

It belongs to the antenna complex alpha subunit family. The core complex is formed by different alpha and beta chains, binding bacteriochlorophyll molecules, and arranged most probably in tetrameric structures disposed around the reaction center. The non-pigmented gamma chains may constitute additional components.

It is found in the cell inner membrane. Its function is as follows. Antenna complexes are light-harvesting systems, which transfer the excitation energy to the reaction centers. This Cereibacter sphaeroides (Rhodobacter sphaeroides) protein is Light-harvesting protein B-800/850 alpha chain (pucA).